Here is a 326-residue protein sequence, read N- to C-terminus: Target of rapamycin complex subunit LST8 (326 aa).

The residue at position 1 (Met-1) is an N-acetylmethionine. 5 WD repeats span residues 1–37 (MNTTPGTVGSDPVILATAGYDHTVRFWQAHSGICTRT), 40–80 (HQDS…PIIS), 83–122 (GVSKNIASVGFHEDGRWMYTGGEDCTARIWDLRSRNLQCQ), 126–165 (QVNAPINCVCLHPNQAELIVGDQSGAIHIWDLKTDHNEQL), and 168–207 (EPESSITSAHIDPDASYMAAVNSAGNCYVWNLTGGIGDDV). The residue at position 51 (Thr-51) is a Phosphothreonine. Lys-86 participates in a covalent cross-link: Glycyl lysine isopeptide (Lys-Gly) (interchain with G-Cter in SUMO3). Residues Lys-215, Lys-245, and Lys-261 each participate in a glycyl lysine isopeptide (Lys-Gly) (interchain with G-Cter in SUMO3) cross-link. One copy of the WD 6 repeat lies at 218–257 (AHTRYALQCRFSPDSTLLATCSADQTCKIWRTSNFSLMTE). The WD 7 repeat unit spans residues 268–309 (SSRGWMWGCAFSGDSQYIVTASSDNLARLWCVETGEIKREYG). Residue Lys-305 forms a Glycyl lysine isopeptide (Lys-Gly) (interchain with G-Cter in SUMO3); alternate linkage. Residues Lys-305 and Lys-313 each participate in a glycyl lysine isopeptide (Lys-Gly) (interchain with G-Cter in ubiquitin); alternate cross-link. Lys-313 is covalently cross-linked (Glycyl lysine isopeptide (Lys-Gly) (interchain with G-Cter in SUMO1); alternate).

It belongs to the WD repeat LST8 family. As to quaternary structure, part of the mechanistic target of rapamycin complex 1 (mTORC1) which contains MTOR, MLST8 and RPTOR. mTORC1 associates with AKT1S1/PRAS40, which inhibits its activity. mTORC1 binds to and is inhibited by FKBP12-rapamycin. Within mTORC1, interacts directly with MTOR and RPTOR. Component of the mechanistic target of rapamycin complex 2 (mTORC2), consisting in two heterotretramers composed of MTOR, MLST8, RICTOR and MAPKAP1/SIN1. Contrary to mTORC1, mTORC2 does not bind to and is not sensitive to FKBP12-rapamycin. mTORC1 and mTORC2 associate with DEPTOR, which regulates their activity. Interacts with RHEB. Interacts with MEAK7. Interacts with SIK3. Interacts with SLC38A7; this interaction promotes the recruitment of mTORC1 to the lysosome and its subsequent activation. Phosphorylation at Thr-51 by CDK1 promotes ubiquitination by the SCF(FBXW7) complex, followed by degradation. Post-translationally, ubiquitination by the SCF(FBXW7) and SCF(FBXW11) complexes following phosphorylation at Thr-51 by CDK1, leads to its degradation by the proteasome. Ubiquitination at Lys-305 and Lys-313 by TRAF2 via 'Lys-63'-linked polyubiquitin chains inhibits formation of the mTORC2 complex, while promoting formation of the mTORC1 complex: ubiquitination disrupts the interaction between MLST8 and MAPKAP1/SIN1 to favor mTORC1 assembly. Deubiquitination at Lys-305 and Lys-313 by OTUD7B promotes MLST8 interaction with MAPKAP1/SIN1, facilitating mTORC2 assembly. In terms of processing, sumoylation with SUMO1, SUMO2 and SUMO3 promotes assembly of both mTORC1 and mTORC2 complexes.

Its subcellular location is the lysosome membrane. The protein localises to the cytoplasm. Its function is as follows. Subunit of both mTORC1 and mTORC2, which regulates cell growth and survival in response to nutrient and hormonal signals. mTORC1 is activated in response to growth factors or amino acids. In response to nutrients, mTORC1 is recruited to the lysosome membrane and promotes protein, lipid and nucleotide synthesis by phosphorylating several substrates, such as ribosomal protein S6 kinase (RPS6KB1 and RPS6KB2) and EIF4EBP1 (4E-BP1). In the same time, it inhibits catabolic pathways by phosphorylating the autophagy initiation components ULK1 and ATG13, as well as transcription factor TFEB, a master regulators of lysosomal biogenesis and autophagy. The mTORC1 complex is inhibited in response to starvation and amino acid depletion. Within mTORC1, MLST8 interacts directly with MTOR and enhances its kinase activity. In nutrient-poor conditions, stabilizes the MTOR-RPTOR interaction and favors RPTOR-mediated inhibition of MTOR activity. As part of the mTORC2 complex, transduces signals from growth factors to pathways involved in proliferation, cytoskeletal organization, lipogenesis and anabolic output. mTORC2 is also activated by growth factors, but seems to be nutrient-insensitive. In response to growth factors, mTORC2 phosphorylates and activates AGC protein kinase family members, including AKT (AKT1, AKT2 and AKT3), PKC (PRKCA, PRKCB and PRKCE) and SGK1. mTORC2 functions upstream of Rho GTPases to regulate the actin cytoskeleton, probably by activating one or more Rho-type guanine nucleotide exchange factors. mTORC2 promotes the serum-induced formation of stress-fibers or F-actin. mTORC2 plays a critical role in AKT1 activation by mediating phosphorylation of different sites depending on the context, such as 'Thr-450', 'Ser-473', 'Ser-477' or 'Thr-479', facilitating the phosphorylation of the activation loop of AKT1 on 'Thr-308' by PDPK1/PDK1 which is a prerequisite for full activation. mTORC2 regulates the phosphorylation of SGK1 at 'Ser-422'. mTORC2 also modulates the phosphorylation of PRKCA on 'Ser-657'. Within mTORC2, MLST8 acts as a bridge between MAPKAP1/SIN1 and MTOR. The polypeptide is Target of rapamycin complex subunit LST8 (Mus musculus (Mouse)).